The sequence spans 159 residues: Afifavidin (159 aa).

An N-terminal signal peptide occupies residues 1–23 (MRRLASLAVALPLLAVVASPALA). Residues 36-151 (GVPAVSSSWV…GSDTFTLVNK (116 aa)) enclose the Avidin-like domain. Biotin is bound by residues Asn46, Ser50, Tyr66, Asn68, and Gly74. The cysteines at positions 75 and 104 are disulfide-linked. Biotin contacts are provided by Ser106, Thr108, and Asp144.

It belongs to the avidin/streptavidin family. As to quaternary structure, exhibits a dynamic oligomeric assembly: the apo form self-assembles mostly into toroid-shaped homooctamers, with a small fraction of homodimers, yet upon biotin binding the intact afifavidin consists solely of the dimer.

It localises to the secreted. The exact role played by afifavidin is still obscure. Forms a strong non-covalent complex with biotin and 2-iminobiotin. The protein is Afifavidin of Afifella pfennigii (Rhodobium pfennigii).